The following is a 124-amino-acid chain: UPF0231 protein Shewmr4_0656 (124 aa).

It belongs to the UPF0231 family.

The sequence is that of UPF0231 protein Shewmr4_0656 from Shewanella sp. (strain MR-4).